The chain runs to 107 residues: Small ribosomal subunit protein uS10m (107 aa).

It belongs to the universal ribosomal protein uS10 family.

It is found in the mitochondrion. The sequence is that of Small ribosomal subunit protein uS10m (RPS10) from Prototheca wickerhamii.